The following is a 655-amino-acid chain: Fructose-1,6-bisphosphatase class 3 (655 aa).

This sequence belongs to the FBPase class 3 family. It depends on Mn(2+) as a cofactor.

It carries out the reaction beta-D-fructose 1,6-bisphosphate + H2O = beta-D-fructose 6-phosphate + phosphate. The protein operates within carbohydrate biosynthesis; gluconeogenesis. The chain is Fructose-1,6-bisphosphatase class 3 from Porphyromonas gingivalis (strain ATCC BAA-308 / W83).